A 569-amino-acid chain; its full sequence is Urease subunit alpha (569 aa).

The region spanning 132-569 (GGIDSHIHFI…LPLAQRYFLF (438 aa)) is the Urease domain. Ni(2+) is bound by residues His137, His139, and Lys220. Position 220 is an N6-carboxylysine (Lys220). His222 contacts substrate. 2 residues coordinate Ni(2+): His249 and His275. The active-site Proton donor is the His323. Asp363 contacts Ni(2+).

Belongs to the metallo-dependent hydrolases superfamily. Urease alpha subunit family. As to quaternary structure, heterotrimer of UreA (gamma), UreB (beta) and UreC (alpha) subunits. Three heterotrimers associate to form the active enzyme. Ni cation serves as cofactor. Carboxylation allows a single lysine to coordinate two nickel ions.

Its subcellular location is the cytoplasm. It carries out the reaction urea + 2 H2O + H(+) = hydrogencarbonate + 2 NH4(+). It functions in the pathway nitrogen metabolism; urea degradation; CO(2) and NH(3) from urea (urease route): step 1/1. In Dechloromonas aromatica (strain RCB), this protein is Urease subunit alpha.